Here is a 293-residue protein sequence, read N- to C-terminus: 4-hydroxy-tetrahydrodipicolinate synthase (293 aa).

Thr45 lines the pyruvate pocket. Tyr133 serves as the catalytic Proton donor/acceptor. Catalysis depends on Lys161, which acts as the Schiff-base intermediate with substrate. Residue Ile203 coordinates pyruvate.

Belongs to the DapA family. In terms of assembly, homotetramer; dimer of dimers.

The protein resides in the cytoplasm. It carries out the reaction L-aspartate 4-semialdehyde + pyruvate = (2S,4S)-4-hydroxy-2,3,4,5-tetrahydrodipicolinate + H2O + H(+). Its pathway is amino-acid biosynthesis; L-lysine biosynthesis via DAP pathway; (S)-tetrahydrodipicolinate from L-aspartate: step 3/4. In terms of biological role, catalyzes the condensation of (S)-aspartate-beta-semialdehyde [(S)-ASA] and pyruvate to 4-hydroxy-tetrahydrodipicolinate (HTPA). The polypeptide is 4-hydroxy-tetrahydrodipicolinate synthase (Aliivibrio fischeri (strain MJ11) (Vibrio fischeri)).